A 406-amino-acid polypeptide reads, in one-letter code: Tryptophan synthase beta chain (406 aa).

Residue Lys-99 is modified to N6-(pyridoxal phosphate)lysine.

The protein belongs to the TrpB family. Tetramer of two alpha and two beta chains. Pyridoxal 5'-phosphate is required as a cofactor.

The enzyme catalyses (1S,2R)-1-C-(indol-3-yl)glycerol 3-phosphate + L-serine = D-glyceraldehyde 3-phosphate + L-tryptophan + H2O. The protein operates within amino-acid biosynthesis; L-tryptophan biosynthesis; L-tryptophan from chorismate: step 5/5. The beta subunit is responsible for the synthesis of L-tryptophan from indole and L-serine. The protein is Tryptophan synthase beta chain of Rhizobium etli (strain CIAT 652).